Consider the following 140-residue polypeptide: Coiled-coil domain-containing protein 126 (140 aa).

A signal peptide spans 1–35 (MFRTISRKNMSQKLSFLLLVFGLIWGLMLLHYTLQ). N110 carries N-linked (GlcNAc...) asparagine glycosylation. Residues 118 to 130 (NGTNGNLVPVTTN) show a composition bias toward low complexity. Residues 118-140 (NGTNGNLVPVTTNKRTSVSGSVR) form a disordered region. The span at 131 to 140 (KRTSVSGSVR) shows a compositional bias: polar residues.

It is found in the secreted. In Mus musculus (Mouse), this protein is Coiled-coil domain-containing protein 126 (Ccdc126).